We begin with the raw amino-acid sequence, 143 residues long: Hemoglobin subunit alpha (143 aa).

One can recognise a Globin domain in the interval 2-143; it reads VLSPADKTNV…VSTVLVSKYR (142 aa). Serine 4 carries the post-translational modification Phosphoserine. An N6-succinyllysine modification is found at lysine 8. Position 9 is a phosphothreonine (threonine 9). Lysine 12 is modified (N6-succinyllysine). Lysine 17 is subject to N6-acetyllysine; alternate. The residue at position 17 (lysine 17) is an N6-succinyllysine; alternate. At tyrosine 25 the chain carries Phosphotyrosine. Residue serine 36 is modified to Phosphoserine. Position 41 is an N6-succinyllysine (lysine 41). Residue serine 51 is modified to Phosphoserine. Histidine 60 is a binding site for O2. Histidine 89 lines the heme b pocket. Phosphoserine is present on serine 104. Threonine 110 carries the post-translational modification Phosphothreonine. Serine 126 bears the Phosphoserine mark. Threonine 136 carries the post-translational modification Phosphothreonine. Phosphoserine is present on serine 140.

Belongs to the globin family. In terms of assembly, heterotetramer of two alpha chains and two beta chains. As to expression, red blood cells.

Its function is as follows. Involved in oxygen transport from the lung to the various peripheral tissues. Functionally, hemopressin acts as an antagonist peptide of the cannabinoid receptor CNR1. Hemopressin-binding efficiently blocks cannabinoid receptor CNR1 and subsequent signaling. In Pipistrellus abramus (Japanese pipistrelle), this protein is Hemoglobin subunit alpha (HBA).